A 105-amino-acid chain; its full sequence is Met repressor (105 aa).

This sequence belongs to the MetJ family. As to quaternary structure, homodimer.

It localises to the cytoplasm. Functionally, this regulatory protein, when combined with SAM (S-adenosylmethionine) represses the expression of the methionine regulon and of enzymes involved in SAM synthesis. The sequence is that of Met repressor from Sodalis glossinidius (strain morsitans).